The following is a 189-amino-acid chain: MTKLIVGLGNPGDKYFETKHNVGFMLVDKLCKDLNLKFTVDKIFQSEIASTFLNGEKIYFIKPTTFMNESGKAVHALLTYYGLEVEDLLVIYDDLDMEVGKIRLRAKGSAGGHNGIKSIIKHIGTQDFKRVKIGIGRPKEGMTVVHHVLGKFDRDDYITILNTLDKVDNAVNYYLQSGNFEQAMQKYNG.

TRNA is bound at residue Tyr-15. Catalysis depends on His-20, which acts as the Proton acceptor. Phe-66, Asn-68, and Asn-114 together coordinate tRNA.

This sequence belongs to the PTH family. Monomer.

It is found in the cytoplasm. It carries out the reaction an N-acyl-L-alpha-aminoacyl-tRNA + H2O = an N-acyl-L-amino acid + a tRNA + H(+). In terms of biological role, hydrolyzes ribosome-free peptidyl-tRNAs (with 1 or more amino acids incorporated), which drop off the ribosome during protein synthesis, or as a result of ribosome stalling. Functionally, catalyzes the release of premature peptidyl moieties from peptidyl-tRNA molecules trapped in stalled 50S ribosomal subunits, and thus maintains levels of free tRNAs and 50S ribosomes. This is Peptidyl-tRNA hydrolase from Streptococcus gordonii (strain Challis / ATCC 35105 / BCRC 15272 / CH1 / DL1 / V288).